We begin with the raw amino-acid sequence, 389 residues long: Lipopolysaccharide assembly protein B (389 aa).

A helical membrane pass occupies residues 1–20 (MLELLFLLLPVAAAYGWYMG). The Cytoplasmic portion of the chain corresponds to 21 to 389 (RRSAQQNKQD…IKPIRGLDGL (369 aa)). 7 TPR repeats span residues 35 to 68 (LSRD…DTGT), 69 to 102 (VEAH…ASLT), 107 to 140 (LLAI…TDFR), 142 to 174 (GALQ…GKDK), 180 to 213 (AHFY…DKNS), 214 to 247 (ARVS…DREL), and 249 to 282 (SETL…NTGA). 4 residues coordinate Fe cation: Cys357, Cys360, Cys371, and Cys374.

The protein belongs to the LapB family.

It is found in the cell inner membrane. Modulates cellular lipopolysaccharide (LPS) levels by regulating LpxC, which is involved in lipid A biosynthesis. May act by modulating the proteolytic activity of FtsH towards LpxC. May also coordinate assembly of proteins involved in LPS synthesis at the plasma membrane. The chain is Lipopolysaccharide assembly protein B from Escherichia coli O157:H7.